Here is a 211-residue protein sequence, read N- to C-terminus: Claudin-1 (211 aa).

Over 1 to 7 (MANAGLQ) the chain is Cytoplasmic. The helical transmembrane segment at 8–28 (LLGFILASLGWIGSIVSTALP) threads the bilayer. At 29–81 (QWKIYSYAGDNIVTAQAIYEGLWMSCVSQSTGQIQCKVFDSLLNLNSTLQATR) the chain is on the extracellular side. An intrachain disulfide couples cysteine 54 to cysteine 64. A helical membrane pass occupies residues 82 to 102 (ALMVIGILLGLIAIFVSTIGM). At 103-115 (KCMRCLEDDEVQK) the chain is on the cytoplasmic side. The helical transmembrane segment at 116-136 (MWMAVIGGIIFLISGLATLVA) threads the bilayer. Residues 137–163 (TAWYGNRIVQEFYDPLTPINARYEFGQ) are Extracellular-facing. A helical membrane pass occupies residues 164 to 184 (ALFTGWAAASLCLLGGVLLSC). The Cytoplasmic segment spans residues 185 to 211 (SCPRKTTSYPTPRPYPKPTPSSGKDYV). Residues 190–211 (TTSYPTPRPYPKPTPSSGKDYV) are disordered. Residues 210 to 211 (YV) form an interactions with TJP1, TJP2, TJP3 and PATJ region.

It belongs to the claudin family. In terms of assembly, can form homo- and heteropolymers with other CLDN. Homopolymers interact with CLDN3, but not CLDN2, homopolymers. Directly interacts with TJP1/ZO-1, TJP2/ZO-2 and TJP3/ZO-3. Interacts with MPDZ and PATJ. Interacts with OCLN, CD81, CLDN4, CLDN6 and CLDN9. In terms of tissue distribution, detected in epidermis and liver (at protein level). Widely expressed, with highest levels in liver and kidney.

It localises to the cell junction. Its subcellular location is the tight junction. The protein resides in the cell membrane. It is found in the basolateral cell membrane. In terms of biological role, claudins function as major constituents of the tight junction complexes that regulate the permeability of epithelia. While some claudin family members play essential roles in the formation of impermeable barriers, others mediate the permeability to ions and small molecules. Often, several claudin family members are coexpressed and interact with each other, and this determines the overall permeability. CLDN1 is required to prevent the paracellular diffusion of small molecules through tight junctions in the epidermis and is required for the normal barrier function of the skin. Required for normal water homeostasis and to prevent excessive water loss through the skin, probably via an indirect effect on the expression levels of other proteins, since CLDN1 itself seems to be dispensable for water barrier formation in keratinocyte tight junctions. The sequence is that of Claudin-1 (Cldn1) from Mus musculus (Mouse).